Here is a 450-residue protein sequence, read N- to C-terminus: Glutamate--tRNA ligase 1 (450 aa).

The 'HIGH' region motif lies at 7–17 (PSPTGYMHVGN). The short motif at 236–240 (KISKR) is the 'KMSKS' region element. An ATP-binding site is contributed by K239.

Belongs to the class-I aminoacyl-tRNA synthetase family. Glutamate--tRNA ligase type 1 subfamily. In terms of assembly, monomer.

It localises to the cytoplasm. It catalyses the reaction tRNA(Glu) + L-glutamate + ATP = L-glutamyl-tRNA(Glu) + AMP + diphosphate. Its function is as follows. Catalyzes the attachment of glutamate to tRNA(Glu) in a two-step reaction: glutamate is first activated by ATP to form Glu-AMP and then transferred to the acceptor end of tRNA(Glu). The sequence is that of Glutamate--tRNA ligase 1 from Anaplasma phagocytophilum (strain HZ).